A 132-amino-acid polypeptide reads, in one-letter code: Small ribosomal subunit protein uS8 (132 aa).

Belongs to the universal ribosomal protein uS8 family. As to quaternary structure, part of the 30S ribosomal subunit. Contacts proteins S5 and S12.

Its function is as follows. One of the primary rRNA binding proteins, it binds directly to 16S rRNA central domain where it helps coordinate assembly of the platform of the 30S subunit. This is Small ribosomal subunit protein uS8 from Natranaerobius thermophilus (strain ATCC BAA-1301 / DSM 18059 / JW/NM-WN-LF).